The following is a 270-amino-acid chain: Co-chaperone protein DjlA (270 aa).

The Periplasmic portion of the chain corresponds to 1-6 (MQYWGK). The chain crosses the membrane as a helical span at residues 7–31 (IIGVAVALMMGGGFWGVVLGLLVGH). The Cytoplasmic segment spans residues 32–270 (MFDKARSRKM…ELIKEQKGFK (239 aa)). In terms of domain architecture, J spans 204–270 (DACNVLGVKT…ELIKEQKGFK (67 aa)).

As to quaternary structure, homodimer.

The protein localises to the cell inner membrane. Functionally, regulatory DnaK co-chaperone. Direct interaction between DnaK and DjlA is needed for the induction of the wcaABCDE operon, involved in the synthesis of a colanic acid polysaccharide capsule, possibly through activation of the RcsB/RcsC phosphotransfer signaling pathway. The colanic acid capsule may help the bacterium survive conditions outside the host. The polypeptide is Co-chaperone protein DjlA (Salmonella paratyphi A (strain ATCC 9150 / SARB42)).